Reading from the N-terminus, the 280-residue chain is Putative sugar uptake protein (280 aa).

The next 10 helical transmembrane spans lie at 4 to 21 (LIAL…LIAG), 33 to 52 (MGLG…IHPA), 56 to 78 (ITIF…GQFI), 91 to 113 (LSTG…EWTS), 117 to 136 (YLIG…LTAI), 149 to 166 (IILL…SSFP), 176 to 195 (LFLP…LLVS), 207 to 229 (WLNI…SAQL), 233 to 255 (ITAF…FFIG), and 262 to 279 (ELIA…GAAI).

The protein belongs to the GRP transporter (TC 2.A.7.5) family.

It is found in the cell membrane. The sequence is that of Putative sugar uptake protein from Lactobacillus helveticus (Lactobacillus suntoryeus).